Consider the following 135-residue polypeptide: Fluoride-specific ion channel FluC (135 aa).

4 helical membrane-spanning segments follow: residues 12 to 32 (FLVIGLGAAFGAWTRWLLGLS), 42 to 62 (LGTLAANVIGGYLVGVAVGIF), 70 to 90 (LAWKLFAITGFLGGLTTFSTF), and 106 to 126 (AIGLASVHLAGSLTATYLGLL). Positions 82 and 85 each coordinate Na(+).

It belongs to the fluoride channel Fluc/FEX (TC 1.A.43) family.

Its subcellular location is the cell inner membrane. It catalyses the reaction fluoride(in) = fluoride(out). Na(+) is not transported, but it plays an essential structural role and its presence is essential for fluoride channel function. Functionally, fluoride-specific ion channel. Important for reducing fluoride concentration in the cell, thus reducing its toxicity. The chain is Fluoride-specific ion channel FluC from Dechloromonas aromatica (strain RCB).